Reading from the N-terminus, the 345-residue chain is Cytoskeleton protein RodZ (345 aa).

Topologically, residues 1-111 are cytoplasmic; that stretch reads MNTEASQDQT…LGKKHKKRDG (111 aa). One can recognise an HTH cro/C1-type domain in the interval 19–79; sequence LRQARESLGL…KLVHLPEDEL (61 aa). Positions 30–49 form a DNA-binding region, H-T-H motif; the sequence is QQTVAERLCLKVSTIRDIEE. A helical; Signal-anchor for type II membrane protein transmembrane segment spans residues 112 to 132; sequence WLMSFTWLIVLVVLGLTGAWW. The Periplasmic segment spans residues 133–345; it reads WQNHQAQQAE…RVARLTVGVE (213 aa). The tract at residues 151–260 is disordered; it reads SAQLSQNGGQ…LPTADAGVSG (110 aa). A compositionally biased stretch (polar residues) spans 188–225; that stretch reads PLTNHSGSAITNSATTSSVPKTTSTEPVDTANTNTTMH. The span at 229 to 241 shows a compositional bias: low complexity; that stretch reads AASAAVSPSQVPQ.

Belongs to the RodZ family.

The protein resides in the cell inner membrane. Cytoskeletal protein that is involved in cell-shape control through regulation of the length of the long axis. The chain is Cytoskeleton protein RodZ from Yersinia pestis (strain Pestoides F).